A 134-amino-acid polypeptide reads, in one-letter code: ATP synthase epsilon chain (134 aa).

The protein belongs to the ATPase epsilon chain family. In terms of assembly, F-type ATPases have 2 components, CF(1) - the catalytic core - and CF(0) - the membrane proton channel. CF(1) has five subunits: alpha(3), beta(3), gamma(1), delta(1), epsilon(1). CF(0) has three main subunits: a, b and c.

The protein localises to the cell membrane. Its function is as follows. Produces ATP from ADP in the presence of a proton gradient across the membrane. The protein is ATP synthase epsilon chain of Clostridium botulinum (strain Eklund 17B / Type B).